The chain runs to 482 residues: Cysteine--tRNA ligase (482 aa).

Residue cysteine 28 participates in Zn(2+) binding. Positions 30–40 (PTVYNFLHVGN) match the 'HIGH' region motif. Cysteine 208, histidine 233, and glutamate 237 together coordinate Zn(2+). The short motif at 265–269 (KMSKS) is the 'KMSKS' region element. Lysine 268 contributes to the ATP binding site.

This sequence belongs to the class-I aminoacyl-tRNA synthetase family. Monomer. It depends on Zn(2+) as a cofactor.

It localises to the cytoplasm. It catalyses the reaction tRNA(Cys) + L-cysteine + ATP = L-cysteinyl-tRNA(Cys) + AMP + diphosphate. The sequence is that of Cysteine--tRNA ligase from Bdellovibrio bacteriovorus (strain ATCC 15356 / DSM 50701 / NCIMB 9529 / HD100).